Consider the following 236-residue polypeptide: Probable sulfate/thiosulfate import ATP-binding protein CysA (236 aa).

Positions 3–233 (ILIENISKRF…PTNTFVTNFL (231 aa)) constitute an ABC transporter domain. 35–42 (GPSGSGKS) serves as a coordination point for ATP.

The protein belongs to the ABC transporter superfamily. Sulfate/tungstate importer (TC 3.A.1.6) family.

The protein localises to the plastid. It localises to the chloroplast. It catalyses the reaction sulfate(out) + ATP + H2O = sulfate(in) + ADP + phosphate + H(+). The enzyme catalyses thiosulfate(out) + ATP + H2O = thiosulfate(in) + ADP + phosphate + H(+). In terms of biological role, part of the ABC transporter complex involved in sulfate/thiosulfate import. Responsible for energy coupling to the transport system. The polypeptide is Probable sulfate/thiosulfate import ATP-binding protein CysA (Chlorella vulgaris (Green alga)).